A 380-amino-acid polypeptide reads, in one-letter code: Erythronate-4-phosphate dehydrogenase (380 aa).

Positions 45 and 66 each coordinate substrate. Residues 126–127, aspartate 146, threonine 174, 205–207, and aspartate 231 contribute to the NAD(+) site; these read QV and ASR. Arginine 207 is an active-site residue. Glutamate 236 is a catalytic residue. Residue histidine 253 is the Proton donor of the active site. Glycine 256 is an NAD(+) binding site. Tyrosine 257 provides a ligand contact to substrate.

Belongs to the D-isomer specific 2-hydroxyacid dehydrogenase family. PdxB subfamily. Homodimer.

It localises to the cytoplasm. The enzyme catalyses 4-phospho-D-erythronate + NAD(+) = (R)-3-hydroxy-2-oxo-4-phosphooxybutanoate + NADH + H(+). The protein operates within cofactor biosynthesis; pyridoxine 5'-phosphate biosynthesis; pyridoxine 5'-phosphate from D-erythrose 4-phosphate: step 2/5. Functionally, catalyzes the oxidation of erythronate-4-phosphate to 3-hydroxy-2-oxo-4-phosphonooxybutanoate. The sequence is that of Erythronate-4-phosphate dehydrogenase from Azotobacter vinelandii (strain DJ / ATCC BAA-1303).